We begin with the raw amino-acid sequence, 438 residues long: GDP-mannose 6-dehydrogenase (438 aa).

NAD(+) contacts are provided by Y10, V11, D30, K35, T86, and T124. Positions 161, 210, 214, 217, 225, 256, 257, 259, 262, and 265 each coordinate GDP-alpha-D-mannuronate. Residue C268 is part of the active site. NAD(+) is bound at residue K271. K324 lines the GDP-alpha-D-mannuronate pocket. Position 331 (R331) interacts with NAD(+).

It belongs to the UDP-glucose/GDP-mannose dehydrogenase family.

It catalyses the reaction GDP-alpha-D-mannose + 2 NAD(+) + H2O = GDP-alpha-D-mannuronate + 2 NADH + 3 H(+). It functions in the pathway glycan biosynthesis; alginate biosynthesis. Catalyzes the oxidation of guanosine diphospho-D-mannose (GDP-D-mannose) to GDP-D-mannuronic acid, a precursor for alginate polymerization. The alginate layer causes a mucoid phenotype and provides a protective barrier against host immune defenses and antibiotics. In Pseudomonas savastanoi pv. phaseolicola (Pseudomonas syringae pv. phaseolicola), this protein is GDP-mannose 6-dehydrogenase (algD).